The chain runs to 200 residues: 6,7-dimethyl-8-ribityllumazine synthase (200 aa).

Residues tryptophan 25, 59-61 (SWE), and 119-121 (VLI) contribute to the 5-amino-6-(D-ribitylamino)uracil site. 124 to 125 (ET) contacts (2S)-2-hydroxy-3-oxobutyl phosphate. Catalysis depends on histidine 127, which acts as the Proton donor. Position 152 (phenylalanine 152) interacts with 5-amino-6-(D-ribitylamino)uracil. Arginine 166 lines the (2S)-2-hydroxy-3-oxobutyl phosphate pocket.

This sequence belongs to the DMRL synthase family. In terms of assembly, homopentamer.

It catalyses the reaction (2S)-2-hydroxy-3-oxobutyl phosphate + 5-amino-6-(D-ribitylamino)uracil = 6,7-dimethyl-8-(1-D-ribityl)lumazine + phosphate + 2 H2O + H(+). Its pathway is cofactor biosynthesis; riboflavin biosynthesis; riboflavin from 2-hydroxy-3-oxobutyl phosphate and 5-amino-6-(D-ribitylamino)uracil: step 1/2. In terms of biological role, catalyzes the formation of 6,7-dimethyl-8-ribityllumazine by condensation of 5-amino-6-(D-ribitylamino)uracil with 3,4-dihydroxy-2-butanone 4-phosphate. This is the penultimate step in the biosynthesis of riboflavin. This is 6,7-dimethyl-8-ribityllumazine synthase from Pyricularia oryzae (strain 70-15 / ATCC MYA-4617 / FGSC 8958) (Rice blast fungus).